The sequence spans 663 residues: LEAF RUST 10 DISEASE-RESISTANCE LOCUS RECEPTOR-LIKE PROTEIN KINASE-like 1.4 (663 aa).

The first 25 residues, 1–25 (MYYPLSSSLMFFILFSLFYHLPCES), serve as a signal peptide directing secretion. Over 26-241 (SKCESLFQCG…TSLSIGAKAG (216 aa)) the chain is Extracellular. N-linked (GlcNAc...) asparagine glycans are attached at residues N36, N64, N106, N137, and N208. Residues 242-262 (IAVASVSGLAILLLAGLFLCI) traverse the membrane as a helical segment. Topologically, residues 263-663 (RRRRKTQDAQ…TSSSDTAASL (401 aa)) are cytoplasmic. The tract at residues 282 to 304 (SYSSRDTSRNPTSTTISSSSNHS) is disordered. Positions 290 to 304 (RNPTSTTISSSSNHS) are enriched in low complexity. The Protein kinase domain occupies 334-609 (ENFSRELGDG…DEIVEILRGI (276 aa)). Residues 340-348 (LGDGGFGTV) and K362 each bind ATP. D458 acts as the Proton acceptor in catalysis. The tract at residues 637–663 (LLRNSVPPPISPETDKWTSSSDTAASL) is disordered. A compositionally biased stretch (polar residues) spans 653–663 (WTSSSDTAASL).

This sequence belongs to the protein kinase superfamily. Ser/Thr protein kinase family.

Its subcellular location is the cell membrane. It catalyses the reaction L-seryl-[protein] + ATP = O-phospho-L-seryl-[protein] + ADP + H(+). It carries out the reaction L-threonyl-[protein] + ATP = O-phospho-L-threonyl-[protein] + ADP + H(+). The sequence is that of LEAF RUST 10 DISEASE-RESISTANCE LOCUS RECEPTOR-LIKE PROTEIN KINASE-like 1.4 from Arabidopsis thaliana (Mouse-ear cress).